We begin with the raw amino-acid sequence, 354 residues long: AT-rich binding protein (354 aa).

The C2H2-type 1 zinc-finger motif lies at 31 to 54 (IVCHTCQEELQTQDKFWKHIQDEH). Disordered regions lie at residues 84–124 (LPLY…HDDQ) and 256–276 (EVQQ…SSAM). Composition is skewed to basic and acidic residues over residues 89 to 100 (KVSENDQQRDDV) and 109 to 124 (QKEP…HDDQ). Over residues 264–276 (TNNSTTASASSAM) the composition is skewed to low complexity. C2H2-type zinc fingers lie at residues 285–309 (YICD…RSVH) and 315–338 (FACE…KKKH).

Homooctamer. In terms of tissue distribution, fat body.

Its subcellular location is the nucleus. In terms of biological role, may be a transcription factor for genes having (A+T) stretches in their promoter and/or enhancer regions. Binds to AT rich DNA. The polypeptide is AT-rich binding protein (Sarcophaga peregrina (Flesh fly)).